A 312-amino-acid polypeptide reads, in one-letter code: DNA-directed RNA polymerase subunit alpha (312 aa).

Positions 1-226 (MIEFEKPIIT…EHLNLFTDLT (226 aa)) are alpha N-terminal domain (alpha-NTD). The tract at residues 243-312 (DEKVLDRTIE…DLGLGLKNDK (70 aa)) is alpha C-terminal domain (alpha-CTD).

This sequence belongs to the RNA polymerase alpha chain family. Homodimer. The RNAP catalytic core consists of 2 alpha, 1 beta, 1 beta' and 1 omega subunit. When a sigma factor is associated with the core the holoenzyme is formed, which can initiate transcription.

It catalyses the reaction RNA(n) + a ribonucleoside 5'-triphosphate = RNA(n+1) + diphosphate. In terms of biological role, DNA-dependent RNA polymerase catalyzes the transcription of DNA into RNA using the four ribonucleoside triphosphates as substrates. The chain is DNA-directed RNA polymerase subunit alpha from Streptococcus pyogenes serotype M3 (strain ATCC BAA-595 / MGAS315).